The following is a 665-amino-acid chain: Dual specificity protein phosphatase 16 (665 aa).

Residues 22-137 enclose the Rhodanese domain; sequence GTEKVLLIDS…FSRCFPGLCE (116 aa). A (Microbial infection) N6-acetyllysine; by EIS modification is found at Lys-55. Positions 158-300 constitute a Tyrosine-protein phosphatase domain; it reads GPTRILPNLY…LLDYEKKIKN (143 aa). The active-site Phosphocysteine intermediate is the Cys-244. A disordered region spans residues 321-368; it reads EPVPAVSEGGQKSETPLSPPCADSATSEAAGQRPVHPASVPSVPSVQP. Residues 354 to 368 show a composition bias toward low complexity; sequence PVHPASVPSVPSVQP. Ser-446 is subject to Phosphoserine; by MAPK1. 2 stretches are compositionally biased toward polar residues: residues 449–458 and 487–499; these read QELSEQTPET and VRTS…QRSL. Disordered stretches follow at residues 449–505 and 597–665; these read QELS…PLHR and VRRR…IEVS. Position 501 is a phosphoserine (Ser-501). The span at 602-622 shows a compositional bias: basic and acidic residues; sequence KPSDRADSRRSWHEESPFEKQ.

Belongs to the protein-tyrosine phosphatase family. Non-receptor class dual specificity subfamily. In terms of assembly, interacts with ARRB2. Post-translationally, phosphorylated at Ser-446 by MAPK1/ERK2, which prevents its degradation, and thereby stabilizes it and blocks JNK MAPK activity. (Microbial infection) Acetylated at Lys-55 by the M.tuberculosis Eis protein; this leads to the inhibition of JNK-dependent autophagy, phagosome maturation, and ROS (reactive oxygen species) generation for enhanced intracellular survival of M.tuberculosis.

Its subcellular location is the cytoplasm. The protein resides in the nucleus. The protein localises to the cytoplasmic vesicle. It carries out the reaction O-phospho-L-tyrosyl-[protein] + H2O = L-tyrosyl-[protein] + phosphate. The catalysed reaction is O-phospho-L-seryl-[protein] + H2O = L-seryl-[protein] + phosphate. The enzyme catalyses O-phospho-L-threonyl-[protein] + H2O = L-threonyl-[protein] + phosphate. Its function is as follows. Dual specificity protein phosphatase involved in the inactivation of MAP kinases. Dephosphorylates MAPK10 bound to ARRB2. The protein is Dual specificity protein phosphatase 16 (DUSP16) of Homo sapiens (Human).